The sequence spans 1649 residues: MMGSTFKRKISKVTVKVASPEVIRSWSSGEVKKPETINYRTFKPEKDGLFCEKIFGPTKDYECACGKYKGKKYEGTVCERCGVRVESKEARRKRMGHIDLFAPVVHVWYLKSSPSILSSLLGIQAKELENVIYYGGKRIIEKILIVTNPKDTDFIKGSLLYQTEYEIYNQKLDFEVMPGVIIKSPVAPVISSISGEVKIRHEKTHTDREITWVDVRKISRAEHRVYNGMVLNVKNGDYVNQGDEIVSEMQIDPIYAPFDGTVEIDEISNTITIKPLTTSKDMPVTFSLPYGVKPVVPNNSKVKKGDQLTNGTVLPAVIASVSGNISFGKELNVRPLEDGKYEVLTSGSVYVENVVEEKHYPLFEGAFVYVKDGDEISEGQTIADRFLFEDEYLTLDEYKIFEQHYPAMFTAESEVENDRPIVVITEIDDEVSVETGLKIGDIITDHQYSAYRTLYNDKIEADSGASAIKKLLQKLDLEKLKAEIESELKKVSKSSGRAKKLLRRLKIVKDLLKSETKPEWMILEAIPVVPPDIRPMIQVEGGRFATTDLNDLYRRVINRNNRLKKLYEMNSPEIIIKNEKRMLQEAVDSLIYNGRMGKAVTDRNGRALKSLTDLLKGKKGRFRRNLLGKRVDYSGRAVIVVGPHLKIHECGLPKKMAMELFKPFVLAELLNKDDETSKTARKMKKAIIEKEMPQAYEVLEEIIKGHPVLLNRAPTLHRMSLQAFEPKLIEGNAIQLHPLVCPPFNADFDGDQMAVHVPLSAAAQAEAKFLMLSRYNIISPAHGKPISMPGKDIVAGVYYLTMVGKDYDKVQKENIKWKFSSIDEAELAYEFGHIRLHDPILVKVDDRVIKTTYGRLVFANIVPREFRDYNKTYGKGAIKDLVYKTFKKYGVDRTADLLDDIKDLGFHYATISGLTVSITDFYISPERRRIIDEAKKKISEVEELFALGFLSDEERYRETIKIWADATEKVQDATFEYIGKDPFNPVYIMVDSGARGNKDQLKQLAGMRGLMADPSGRTIEIPIISNFREGLSVLEFFISTHGARKGSADTALRTSSAGYLTRRLVDVAQSVVITTTDCGTENGVRATVLKSSDGLTVEKLEDFLFGRVLAKDVYDPKTNSVLVNPENGKEYTRDTMIDDDDAKFLGNYSVRIPVSRELEINLTNPELPENYCELITDFIYDGVHYDEGTEVNWDIIRKAKNSGLEKLTVKEYPIVGKVSVETVVSQKDIKQLVVDEELIMPTTAKILEGHNVESVQVRPEIIVRSVLTCEAEHGVCSKCYGMDLSNHKIIGVGEAVGVVAAQSIGEPGTQLTMRTFHTGGIATTADITQGLPRAEELFEARKKLKEPEGIFSRVKGYVKDIVEDETGKKKVYIEDEAGDIHEYDIPTKVKVSVNKGQKILPGQSLSTGAIRPRKILETLDVDTTALYLLKEIKKVYVEQGVDIHDKHFEIIIKQMLDKVEVIDPGDTDYLPGDLLRLQMVKRINKQILEENVHVETNRKRVIGKILHQHLIAEDENGEIVEIAPEGVEVTEEILEKAIKSGIKEIIVKNGDGEIVTYQILPKEPIKYRRRLLRITKASLERVGWLSAASFQQTPQVLTEAAIEGSVDHLLGLKENVIVGQLIPAGTGLDMFANIQIEETPRLAQKEKMA.

Positions 63, 65, 78, and 81 each coordinate Zn(2+). Mg(2+) is bound by residues aspartate 747, aspartate 749, and aspartate 751. Zn(2+) contacts are provided by cysteine 1078, cysteine 1269, cysteine 1276, and cysteine 1279.

The protein belongs to the RNA polymerase beta' chain family. In terms of assembly, the RNAP catalytic core consists of 2 alpha, 1 beta, 1 beta' and 1 omega subunit. When a sigma factor is associated with the core the holoenzyme is formed, which can initiate transcription. Mg(2+) is required as a cofactor. Zn(2+) serves as cofactor.

It catalyses the reaction RNA(n) + a ribonucleoside 5'-triphosphate = RNA(n+1) + diphosphate. Functionally, DNA-dependent RNA polymerase catalyzes the transcription of DNA into RNA using the four ribonucleoside triphosphates as substrates. The sequence is that of DNA-directed RNA polymerase subunit beta' from Thermosipho melanesiensis (strain DSM 12029 / CIP 104789 / BI429).